The following is a 122-amino-acid chain: Phospholipase A2 nigroviriditoxin basic subunit B (122 aa).

Disulfide bonds link Cys26–Cys115, Cys28–Cys44, Cys43–Cys95, Cys49–Cys122, Cys50–Cys88, Cys57–Cys81, and Cys75–Cys86. Ca(2+) contacts are provided by Tyr27, Gly29, and Gly31. Residue His47 is part of the active site. Ca(2+) is bound at residue Asp48. The active site involves Asp89.

This sequence belongs to the phospholipase A2 family. Group II subfamily. D49 sub-subfamily. Nigroviriditoxin is a heterodimer of an acidic subunit A and a basic subunit B. The cofactor is Ca(2+). As to expression, expressed by the venom gland.

It localises to the secreted. It catalyses the reaction a 1,2-diacyl-sn-glycero-3-phosphocholine + H2O = a 1-acyl-sn-glycero-3-phosphocholine + a fatty acid + H(+). Functionally, heterodimer A-B: Nigroviriditoxin possesses phospholipase A2 (PLA2) activity. It consists of a non-covalent association of a basic PLA2 subunit B with a non-enzymatic subunit A. Subunit B: Snake venom phospholipase A2 (PLA2) that induces myonecrosis in mice. PLA2 catalyzes the calcium-dependent hydrolysis of the 2-acyl groups in 3-sn-phosphoglycerides. The polypeptide is Phospholipase A2 nigroviriditoxin basic subunit B (Bothriechis nigroviridis (Black-speckled palm pit viper)).